A 230-amino-acid chain; its full sequence is Ureidoacrylate amidohydrolase RutB (230 aa).

Asp-24 (proton acceptor) is an active-site residue. The active site involves Lys-133. The Nucleophile role is filled by Cys-166.

It belongs to the isochorismatase family. RutB subfamily.

It catalyses the reaction (Z)-3-ureidoacrylate + H2O + H(+) = (Z)-3-aminoacrylate + NH4(+) + CO2. The enzyme catalyses (Z)-3-ureidoacrylate + H2O = (Z)-3-aminoacrylate + carbamate + H(+). The catalysed reaction is (Z)-2-methylureidoacrylate + H2O + H(+) = (Z)-2-methylaminoacrylate + NH4(+) + CO2. Its function is as follows. Hydrolyzes ureidoacrylate to form aminoacrylate and carbamate. The carbamate hydrolyzes spontaneously, thereby releasing one of the nitrogen atoms of the pyrimidine ring as ammonia and one of its carbon atoms as CO2. In Escherichia coli O7:K1 (strain IAI39 / ExPEC), this protein is Ureidoacrylate amidohydrolase RutB.